A 178-amino-acid polypeptide reads, in one-letter code: ATP synthase subunit delta (178 aa).

It belongs to the ATPase delta chain family. As to quaternary structure, F-type ATPases have 2 components, F(1) - the catalytic core - and F(0) - the membrane proton channel. F(1) has five subunits: alpha(3), beta(3), gamma(1), delta(1), epsilon(1). F(0) has three main subunits: a(1), b(2) and c(10-14). The alpha and beta chains form an alternating ring which encloses part of the gamma chain. F(1) is attached to F(0) by a central stalk formed by the gamma and epsilon chains, while a peripheral stalk is formed by the delta and b chains.

Its subcellular location is the cell membrane. F(1)F(0) ATP synthase produces ATP from ADP in the presence of a proton or sodium gradient. F-type ATPases consist of two structural domains, F(1) containing the extramembraneous catalytic core and F(0) containing the membrane proton channel, linked together by a central stalk and a peripheral stalk. During catalysis, ATP synthesis in the catalytic domain of F(1) is coupled via a rotary mechanism of the central stalk subunits to proton translocation. In terms of biological role, this protein is part of the stalk that links CF(0) to CF(1). It either transmits conformational changes from CF(0) to CF(1) or is implicated in proton conduction. This is ATP synthase subunit delta from Streptococcus pyogenes serotype M49 (strain NZ131).